The primary structure comprises 243 residues: Leucinostatins biosynthesis cluster protein S (243 aa).

Its function is as follows. Part of the gene cluster that mediates the biosynthesis of the lipopeptide antibiotics leucinostatins that show extensive biological activities, including antimalarial, antiviral, antibacterial, antifungal, and antitumor activities, as well as phytotoxic. The function of lcsS within the leucinostatins biosynthesis has not been identified yet. The sequence is that of Leucinostatins biosynthesis cluster protein S from Purpureocillium lilacinum (Paecilomyces lilacinus).